We begin with the raw amino-acid sequence, 68 residues long: Protein SrnB (68 aa).

Residues 23 to 42 (YALIGLLAVCATVLCFSLIF) traverse the membrane as a helical segment.

It belongs to the Hok/Gef family.

It is found in the cell inner membrane. Toxic component of a type I toxin-antitoxin (TA) system. Its normal function is believed to be effective plasmid stabilization through postsegregational killing of cells that have lost the F plasmid. Promotes degradation of stable RNA in E.coli. This is Protein SrnB (srnB) from Escherichia coli (strain K12).